We begin with the raw amino-acid sequence, 354 residues long: Uroporphyrinogen decarboxylase (354 aa).

Substrate is bound by residues 27-31 (RQAGR), Phe46, Asp77, Tyr154, Ser209, and His327.

The protein belongs to the uroporphyrinogen decarboxylase family. In terms of assembly, homodimer.

Its subcellular location is the cytoplasm. The catalysed reaction is uroporphyrinogen III + 4 H(+) = coproporphyrinogen III + 4 CO2. It participates in porphyrin-containing compound metabolism; protoporphyrin-IX biosynthesis; coproporphyrinogen-III from 5-aminolevulinate: step 4/4. Functionally, catalyzes the decarboxylation of four acetate groups of uroporphyrinogen-III to yield coproporphyrinogen-III. This Pseudomonas syringae pv. tomato (strain ATCC BAA-871 / DC3000) protein is Uroporphyrinogen decarboxylase.